Here is a 258-residue protein sequence, read N- to C-terminus: DNA repair protein RecO (258 aa).

It belongs to the RecO family.

Functionally, involved in DNA repair and RecF pathway recombination. This is DNA repair protein RecO from Desulfatibacillum aliphaticivorans.